Reading from the N-terminus, the 545-residue chain is Esterase-5C (545 aa).

Positions 1-19 (MLAARLIILLSFYWLSASA) are cleaved as a signal peptide. The cysteines at positions 84 and 103 are disulfide-linked. N113 carries an N-linked (GlcNAc...) asparagine glycan. Catalysis depends on S207, which acts as the Acyl-ester intermediate. A disulfide bond links C259 and C271. N421 carries N-linked (GlcNAc...) asparagine glycosylation. The Charge relay system role is filled by H467. N-linked (GlcNAc...) asparagine glycosylation is present at N507. A disulfide bridge connects residues C515 and C536.

This sequence belongs to the type-B carboxylesterase/lipase family.

The protein resides in the secreted. The enzyme catalyses a carboxylic ester + H2O = an alcohol + a carboxylate + H(+). The protein is Esterase-5C (Est-5C) of Drosophila persimilis (Fruit fly).